Here is a 146-residue protein sequence, read N- to C-terminus: Flagellar assembly factor FliW (146 aa).

It belongs to the FliW family. As to quaternary structure, interacts with translational regulator CsrA and flagellin(s).

It is found in the cytoplasm. Its function is as follows. Acts as an anti-CsrA protein, binds CsrA and prevents it from repressing translation of its target genes, one of which is flagellin. Binds to flagellin and participates in the assembly of the flagellum. The polypeptide is Flagellar assembly factor FliW (Azoarcus sp. (strain BH72)).